The chain runs to 332 residues: MQTIINKLYEQQGLTQAESQQLFDQIIRGEMDPVLMAAVLTALKIKGETPDEIAGAAKALLANANPFPRPDYDFADIVGTGGDGSNTINISTTAAFVAAACGVKVAKHGNRGVSSKSGSSDLLSSFGINLAMSAQDSRQALDDLGVAFLFAPQYHGGVRHAMPVRQTMKTRTIFNILGPLINPARPNIELMGVYSKDLVRPIAQTMLQMGLKRAAVVHGSGLDEVAIHGETQVAEIRQGELIEYTLTPEDFGVSRYPLDAIRGGEPEENRAIITQILTGNGTAAQMAAVAVNVALLLRLFGQEDLKANTQQAIAVMKSGQAYGLVQQLAQRG.

5-phospho-alpha-D-ribose 1-diphosphate is bound by residues G79, 82–83 (GD), T87, 89–92 (NIST), 107–115 (KHGNRGVSS), and S119. G79 provides a ligand contact to anthranilate. S91 is a binding site for Mg(2+). An anthranilate-binding site is contributed by N110. Residue R165 participates in anthranilate binding. Mg(2+)-binding residues include D223 and E224.

It belongs to the anthranilate phosphoribosyltransferase family. Homodimer. Mg(2+) is required as a cofactor.

It catalyses the reaction N-(5-phospho-beta-D-ribosyl)anthranilate + diphosphate = 5-phospho-alpha-D-ribose 1-diphosphate + anthranilate. Its pathway is amino-acid biosynthesis; L-tryptophan biosynthesis; L-tryptophan from chorismate: step 2/5. Its function is as follows. Catalyzes the transfer of the phosphoribosyl group of 5-phosphorylribose-1-pyrophosphate (PRPP) to anthranilate to yield N-(5'-phosphoribosyl)-anthranilate (PRA). In Vibrio cholerae serotype O1 (strain ATCC 39541 / Classical Ogawa 395 / O395), this protein is Anthranilate phosphoribosyltransferase.